Reading from the N-terminus, the 526-residue chain is MIGVCGFQWSLSFSTMYTVSLPHGPFLGSRAQEAFVGFSVLGLTLLFSKLFYNAYLHPLRKFPGPLLARLSRLYYSYYRSTGQLEWKTLELHKKYGSVVRIAPNELSFNAGTAWDDIYGHTTKRRSGRRLQKEAFFYLGAVAPNGEKNLGASSDEDHSRIRGVLSSAFSEKAVFAQEDLLMRHIGFMVERIRSLNGIPTDAVRWLHHCTFDITTDLSLGASAKTLACDEWSPLAHLMFEGIKEGITAVEILRFAPFKYQAFSLLIKAFGKARLEAFQAAINQAHIRMAQATTDKEDKKPDFMSYIIKANKTSKALTPSEITANVALLLDVGSETTASLLAGCLFYLTKTPHILEKLTSMIRKDFQTPQEINSKNLAQNSYLTAVLNEALRIYPPVAGATPRVTPPEGSQIDGRYVPGNISVAVNQVAMNRSPKNFTNPDQFVPGRWLGDGCFPDDQLQLCQPFSHGPRACQGRNLAWAEMRLIMGHLLWNFDVELSSESENWNSQKTWFIWDKPDLMIRFKSREGQ.

Residues 34 to 56 traverse the membrane as a helical segment; that stretch reads AFVGFSVLGLTLLFSKLFYNAYL. 3 N-linked (GlcNAc...) asparagine glycosylation sites follow: Asn309, Asn418, and Asn434. Residue Cys470 participates in heme binding.

It belongs to the cytochrome P450 family. The cofactor is heme.

The protein resides in the membrane. It functions in the pathway mycotoxin biosynthesis. Functionally, cytochrome P450 monooxygenase; part of the 2 gene clusters that mediate the biosynthesis of fusicoccins, diterpene glucosides that display phytohormone-like activity and function as potent activators of plasma membrane H(+)-ATPases in plants by modifying 14-3-3 proteins and cause the plant disease constriction canker. The first step in the pathway is performed by the fusicoccadiene synthase PaFS that possesses both prenyl transferase and terpene cyclase activity, converting isopentenyl diphosphate and dimethylallyl diphosphate into geranylgeranyl diphosphate (GGDP) and successively converting GGDP into fusicocca-2,10(14)-diene, a precursor for fusicoccin H. The second step is the oxidation at the C-8 position by the cytochrome P450 monooxygenase PaP450-2 to yield fusicocca-2,10(14)-diene-8-beta-ol. The cytochrome P450 monooxygenase PaP450-1 then catalyzes the hydroxylation at the C-16 position to produce fusicocca-2,10(14)-diene-8-beta,16-diol. The dioxygenase fc-dox then catalyzes the 16-oxydation of fusicocca-2,10(14)-diene-8-beta,16-diol to yield an aldehyde (8-beta-hydroxyfusicocca-1,10(14)-dien-16-al). The short-chain dehydrogenase/reductase fc-sdr catalyzes the reduction of the aldehyde to yield fusicocca-1,10(14)-diene-8-beta,16-diol. The next step is the hydroxylation at C-9 performed by the cytochrome P450 monooxygenase PaP450-3 that leads to fusicoccin H aglycon which is glycosylated to fusicoccin H by the O-glycosyltransferase PaGT. Hydroxylation at C-12 by the cytochrome P450 monooxygenase PaP450-4 leads then to the production of fusicoccin Q and is followed by methylation by the O-methyltransferase PaMT to yield fusicoccin P. Fusicoccin P is further converted to fusicoccin J via prenylation by the O-glucose prenyltransferase PaPT. Cytochrome P450 monooxygenase PaP450-5 then performs hydroxylation at C-19 to yield dideacetyl-fusicoccin A which is acetylated to 3'-O-deacetyl-fusicoccin A by the O-acetyltransferase PaAT-2. Finally, a another acetylation by the O-acetyltransferase PaAT-1 yields fusicoccin A. The sequence is that of Fusicoccadiene 8-ol C-16-hydroxylase from Phomopsis amygdali (Fusicoccum amygdali).